The following is a 321-amino-acid chain: NADPH-dependent D-xylose reductase (321 aa).

The active-site Proton donor is the Tyr-50. Residue His-112 coordinates substrate. NADP(+) is bound by residues Ser-167–Asn-168, Ser-216–Glu-225, and Lys-272–Asn-282.

This sequence belongs to the aldo/keto reductase family.

It carries out the reaction xylitol + NAD(+) = D-xylose + NADH + H(+). The catalysed reaction is xylitol + NADP(+) = D-xylose + NADPH + H(+). Its pathway is carbohydrate metabolism; D-xylose degradation. Functionally, reduces D-xylose into xylitol. Preferentially utilizes NADPH as a cosubstrate. The chain is NADPH-dependent D-xylose reductase (XYL1) from Candida boidinii (Yeast).